Consider the following 518-residue polypeptide: MAGYKPVAIQTYPILGEKITQDTLYWNNYKTPVQIKEFGAVSKVDFSPQPPYNYAVTASSRIHIYGRYSQEPIKTFSRFKDTAYCATFRQDGRLLVAGSEDGGVQLFDISGRAPLRQFEGHTKAVHTVDFTADKYHVVSGADDYTVKLWDIPNSKEILTFKEHSDYVRCGCASKLNPDLFITGSYDHTVKMFDARTSESVLSVEHGQPVESVLLFPSGGLLVSAGGRYVKVWDMLKGGQLLVSLKNHHKTVTCLCLSSSGQRLLSGSLDRKVKVYSTTSYKVVHSFDYAASILSLALAHEDETIVVGMTNGILSVKHRKSEAKKESLPRRRRPAYRTFIKGKNYMKQRDDILINRPAKKHLELYDRDLKHFRISKALDRVLDPTCTIKTPEITVSIIKELNRRGVLANALAGRDEKEISHVLNFLIRNLSQPRFAPVLINAAEIIIDIYLPVIGQSPVVDKKFLLLQGLVEKEIDYQRELLETLGMMDMLFATMRRKEGTSVLEHTSDGFPENKKIES.

The residue at position 2 (A2) is an N-acetylalanine. 7 WD repeats span residues 36–75, 78–117, 120–159, 162–202, 204–242, 246–285, and 287–326; these read KEFG…PIKT, RFKD…PLRQ, GHTK…EILT, EHSD…SVLS, EHGQ…QLLV, NHHK…VVHS, and DYAA…KKES. K249 participates in a covalent cross-link: Glycyl lysine isopeptide (Lys-Gly) (interchain with G-Cter in SUMO2).

Part of the small subunit (SSU) processome, composed of more than 70 proteins and the RNA chaperone small nucleolar RNA (snoRNA) U3. May be a component of the proposed t-UTP subcomplex of the ribosomal small subunit (SSU) processome containing at least UTP4, WDR43, HEATR1, UTP15, WDR75. Interacts directly with UTP4 and WDR43.

The protein resides in the nucleus. It is found in the nucleolus. In terms of biological role, ribosome biogenesis factor. Involved in nucleolar processing of pre-18S ribosomal RNA. Required for optimal pre-ribosomal RNA transcription by RNA polymerase I. Part of the small subunit (SSU) processome, first precursor of the small eukaryotic ribosomal subunit. During the assembly of the SSU processome in the nucleolus, many ribosome biogenesis factors, an RNA chaperone and ribosomal proteins associate with the nascent pre-rRNA and work in concert to generate RNA folding, modifications, rearrangements and cleavage as well as targeted degradation of pre-ribosomal RNA by the RNA exosome. This chain is U3 small nucleolar RNA-associated protein 15 homolog, found in Homo sapiens (Human).